Reading from the N-terminus, the 133-residue chain is ATP synthase epsilon chain, chloroplastic (133 aa).

The protein belongs to the ATPase epsilon chain family. F-type ATPases have 2 components, CF(1) - the catalytic core - and CF(0) - the membrane proton channel. CF(1) has five subunits: alpha(3), beta(3), gamma(1), delta(1), epsilon(1). CF(0) has three main subunits: a, b and c.

It is found in the plastid. The protein resides in the chloroplast thylakoid membrane. Functionally, produces ATP from ADP in the presence of a proton gradient across the membrane. This is ATP synthase epsilon chain, chloroplastic from Phaeodactylum tricornutum (strain CCAP 1055/1).